Here is an 845-residue protein sequence, read N- to C-terminus: Protein translocase subunit SecA 1 (845 aa).

Residues glutamine 85, 103-107 (GEGKT), and aspartate 492 each bind ATP.

Belongs to the SecA family. In terms of assembly, monomer and homodimer. Part of the essential Sec protein translocation apparatus which comprises SecA, SecYEG and auxiliary proteins SecDF. Other proteins may also be involved.

It is found in the cell membrane. It localises to the cytoplasm. It catalyses the reaction ATP + H2O + cellular proteinSide 1 = ADP + phosphate + cellular proteinSide 2.. Functionally, part of the Sec protein translocase complex. Interacts with the SecYEG preprotein conducting channel. Has a central role in coupling the hydrolysis of ATP to the transfer of proteins into and across the cell membrane, serving as an ATP-driven molecular motor driving the stepwise translocation of polypeptide chains across the membrane. The polypeptide is Protein translocase subunit SecA 1 (Corynebacterium glutamicum (strain ATCC 13032 / DSM 20300 / JCM 1318 / BCRC 11384 / CCUG 27702 / LMG 3730 / NBRC 12168 / NCIMB 10025 / NRRL B-2784 / 534)).